The sequence spans 305 residues: Putative HTH-type transcriptional regulatory protein Saci_1344 (305 aa).

One can recognise an HTH cro/C1-type domain in the interval 128 to 183 (LREKREEKNMSLGELSQRLGVSRISVYDYEKEDSYVSIEVAEKLIEIFGDEVIGDI). The segment at residues 139-158 (LGELSQRLGVSRISVYDYEK) is a DNA-binding region (H-T-H motif).

This chain is Putative HTH-type transcriptional regulatory protein Saci_1344, found in Sulfolobus acidocaldarius (strain ATCC 33909 / DSM 639 / JCM 8929 / NBRC 15157 / NCIMB 11770).